The sequence spans 164 residues: Anterior gradient protein 2-B (164 aa).

The N-terminal stretch at 1-20 is a signal peptide; sequence MESVLKSLFVLLVATSFTLA. 2 short sequence motifs (homodimer stabilization; interchain) span residues 34-43 and 49-56; these read SRGWGDNLEW and EGLYKAKA.

The protein belongs to the AGR family. Monomer and homodimer.

It is found in the secreted. It localises to the endoplasmic reticulum. In Xenopus laevis (African clawed frog), this protein is Anterior gradient protein 2-B (agr2-b).